The sequence spans 109 residues: RNA-binding protein Hfq (109 aa).

One can recognise a Sm domain in the interval 9–68; it reads DPFLNALRKEKVSVSVYLVNGIKLQGQVEAFDQFCIVLRNTVNQMVYKHAISTIVPAKSV. The interval 77 to 109 is disordered; sequence PYHQNSNDEQDENVDDIHSDDLEIQENEGNIHE.

This sequence belongs to the Hfq family. In terms of assembly, homohexamer.

Its function is as follows. RNA chaperone that binds small regulatory RNA (sRNAs) and mRNAs to facilitate mRNA translational regulation in response to envelope stress, environmental stress and changes in metabolite concentrations. Also binds with high specificity to tRNAs. The polypeptide is RNA-binding protein Hfq (Francisella tularensis subsp. holarctica (strain FTNF002-00 / FTA)).